Here is a 209-residue protein sequence, read N- to C-terminus: Large ribosomal subunit protein uL3 (209 aa).

A disordered region spans residues 119-145 (AIKRHGQSRGPMSHGSHFHRAPGSVGM).

This sequence belongs to the universal ribosomal protein uL3 family. Part of the 50S ribosomal subunit. Forms a cluster with proteins L14 and L19.

One of the primary rRNA binding proteins, it binds directly near the 3'-end of the 23S rRNA, where it nucleates assembly of the 50S subunit. The protein is Large ribosomal subunit protein uL3 of Staphylococcus aureus (strain COL).